Consider the following 374-residue polypeptide: Chaperone protein DnaJ (374 aa).

Residues Asp-5–Gly-70 form the J domain. Residues Gly-133–Tyr-211 form a CR-type zinc finger. Cys-146, Cys-149, Cys-163, Cys-166, Cys-185, Cys-188, Cys-199, and Cys-202 together coordinate Zn(2+). 4 CXXCXGXG motif repeats span residues Cys-146 to Gly-153, Cys-163 to Gly-170, Cys-185 to Gly-192, and Cys-199 to Gly-206.

The protein belongs to the DnaJ family. As to quaternary structure, homodimer. It depends on Zn(2+) as a cofactor.

It localises to the cytoplasm. Its function is as follows. Participates actively in the response to hyperosmotic and heat shock by preventing the aggregation of stress-denatured proteins and by disaggregating proteins, also in an autonomous, DnaK-independent fashion. Unfolded proteins bind initially to DnaJ; upon interaction with the DnaJ-bound protein, DnaK hydrolyzes its bound ATP, resulting in the formation of a stable complex. GrpE releases ADP from DnaK; ATP binding to DnaK triggers the release of the substrate protein, thus completing the reaction cycle. Several rounds of ATP-dependent interactions between DnaJ, DnaK and GrpE are required for fully efficient folding. Also involved, together with DnaK and GrpE, in the DNA replication of plasmids through activation of initiation proteins. This Pseudomonas putida (strain GB-1) protein is Chaperone protein DnaJ.